A 561-amino-acid polypeptide reads, in one-letter code: DNA mismatch repair protein MutL (561 aa).

This sequence belongs to the DNA mismatch repair MutL/HexB family.

In terms of biological role, this protein is involved in the repair of mismatches in DNA. It is required for dam-dependent methyl-directed DNA mismatch repair. May act as a 'molecular matchmaker', a protein that promotes the formation of a stable complex between two or more DNA-binding proteins in an ATP-dependent manner without itself being part of a final effector complex. The polypeptide is DNA mismatch repair protein MutL (Rippkaea orientalis (strain PCC 8801 / RF-1) (Cyanothece sp. (strain PCC 8801))).